The primary structure comprises 90 residues: Putative regulatory protein cce_4590 (90 aa).

This sequence belongs to the RemA family.

This Crocosphaera subtropica (strain ATCC 51142 / BH68) (Cyanothece sp. (strain ATCC 51142)) protein is Putative regulatory protein cce_4590.